Here is a 301-residue protein sequence, read N- to C-terminus: MAAREMLYVNRETGKVEQERIICSSLVKFFIETRIGRALYSVLCKNSLFSRIVGWCQRLRVTRYFIKPFVTKYRICIEESASPLHDYASFNDFFVRKLKPDARPICQGEDICVTPADGAYLVFPSMADLSLFTIKNKPFSLESFLGDPQLAHQYAQGSMAIARLAPFDYHRFHFPIAGIAEAPRRINGHLFSIHPLMLKRNFEVFTENKREITIITSKEFGEVAYVEVGALNVGSIHQTFSPGSYVKKGAEKGFFAFGGSTVVLLFQPQRIIFDADLVGYSAQGLETRCRMGQSLGKRFSS.

Catalysis depends on charge relay system; for autoendoproteolytic cleavage activity residues Asp117, His173, and Ser260. Ser260 functions as the Schiff-base intermediate with substrate; via pyruvic acid; for decarboxylase activity in the catalytic mechanism. At Ser260 the chain carries Pyruvic acid (Ser); by autocatalysis.

It belongs to the phosphatidylserine decarboxylase family. PSD-B subfamily. Prokaryotic type II sub-subfamily. In terms of assembly, heterodimer of a large membrane-associated beta subunit and a small pyruvoyl-containing alpha subunit. Pyruvate is required as a cofactor. Post-translationally, is synthesized initially as an inactive proenzyme. Formation of the active enzyme involves a self-maturation process in which the active site pyruvoyl group is generated from an internal serine residue via an autocatalytic post-translational modification. Two non-identical subunits are generated from the proenzyme in this reaction, and the pyruvate is formed at the N-terminus of the alpha chain, which is derived from the carboxyl end of the proenzyme. The autoendoproteolytic cleavage occurs by a canonical serine protease mechanism, in which the side chain hydroxyl group of the serine supplies its oxygen atom to form the C-terminus of the beta chain, while the remainder of the serine residue undergoes an oxidative deamination to produce ammonia and the pyruvoyl prosthetic group on the alpha chain. During this reaction, the Ser that is part of the protease active site of the proenzyme becomes the pyruvoyl prosthetic group, which constitutes an essential element of the active site of the mature decarboxylase.

The protein localises to the cell membrane. The enzyme catalyses a 1,2-diacyl-sn-glycero-3-phospho-L-serine + H(+) = a 1,2-diacyl-sn-glycero-3-phosphoethanolamine + CO2. The protein operates within phospholipid metabolism; phosphatidylethanolamine biosynthesis; phosphatidylethanolamine from CDP-diacylglycerol: step 2/2. Catalyzes the formation of phosphatidylethanolamine (PtdEtn) from phosphatidylserine (PtdSer). The sequence is that of Phosphatidylserine decarboxylase proenzyme from Chlamydia trachomatis serovar L2 (strain ATCC VR-902B / DSM 19102 / 434/Bu).